Reading from the N-terminus, the 317-residue chain is Melanocyte-stimulating hormone receptor (317 aa).

At 1–37 the chain is on the extracellular side; sequence MRVQGSQRRLLGSLNSTPTATPHLGLAANQTGARCLE. The N-linked (GlcNAc...) asparagine glycan is linked to Asn-29. Residues 38–63 traverse the membrane as a helical segment; sequence VSIPDGLFLSLGLVSLVENVLVVTAI. The Cytoplasmic portion of the chain corresponds to 64 to 72; it reads AKNRNLHSP. A helical transmembrane segment spans residues 73 to 93; that stretch reads MYCFICCLALSDLLVSGSNML. Residues 94–118 are Extracellular-facing; the sequence is ETAVTLLLEAGALAARAAVVQQLDN. Residues 119-140 traverse the membrane as a helical segment; the sequence is VIDVITCSSMLSSLCFLGAIAV. Residues 141–163 are Cytoplasmic-facing; sequence DRYISIFYALRYHSIVTLPRARR. A helical membrane pass occupies residues 164–183; that stretch reads AIAAIWVASVLCSTLFIAYY. The Extracellular portion of the chain corresponds to 184-191; it reads DHAAVLLC. Residues 192–211 form a helical membrane-spanning segment; that stretch reads LVVFFLAMLVLMAVLYVHML. Topologically, residues 212–240 are cytoplasmic; the sequence is ARACQHAQGIARLHKRQRLAHQGFGLKGA. A helical membrane pass occupies residues 241–266; it reads ATLTILLGIFFLCWGPFFLHLTLIVL. Residues 267–279 are Extracellular-facing; the sequence is CPQHPTCSCIFKN. A helical transmembrane segment spans residues 280–300; the sequence is FNLFLALIICNAIIDPLIYAF. Over 301–317 the chain is Cytoplasmic; it reads RSQELRRTLKEVLLCSW. Cys-315 is lipidated: S-palmitoyl cysteine.

This sequence belongs to the G-protein coupled receptor 1 family. In terms of assembly, interacts with MGRN1, but does not undergo MGRN1-mediated ubiquitination; this interaction competes with GNAS-binding and thus inhibits agonist-induced cAMP production. Interacts with OPN3; the interaction results in a decrease in MC1R-mediated cAMP signaling and ultimately a decrease in melanin production in melanocytes.

Its subcellular location is the cell membrane. Its function is as follows. Receptor for MSH (alpha, beta and gamma) and ACTH. The activity of this receptor is mediated by G proteins which activate adenylate cyclase. Mediates melanogenesis, the production of eumelanin (black/brown) and phaeomelanin (red/yellow), via regulation of cAMP signaling in melanocytes. This Macaca nigra (Celebes black macaque) protein is Melanocyte-stimulating hormone receptor (MC1R).